A 382-amino-acid chain; its full sequence is uncharacterized protein (382 aa).

In terms of domain architecture, PE spans methionine 1–phenylalanine 92. 8 consecutive transmembrane segments (helical) span residues serine 23 to alanine 43, alanine 155 to valine 175, phenylalanine 203 to glycine 223, threonine 230 to valine 250, leucine 261 to phenylalanine 281, alanine 284 to valine 304, leucine 315 to alanine 335, and leucine 347 to glycine 367.

It belongs to the mycobacterial PE family.

Its subcellular location is the cell membrane. This is an uncharacterized protein from Mycobacterium bovis (strain ATCC BAA-935 / AF2122/97).